Here is a 423-residue protein sequence, read N- to C-terminus: UDP-N-acetylglucosamine 1-carboxyvinyltransferase (423 aa).

K22–N23 lines the phosphoenolpyruvate pocket. R93 lines the UDP-N-acetyl-alpha-D-glucosamine pocket. Catalysis depends on C117, which acts as the Proton donor. 2-(S-cysteinyl)pyruvic acid O-phosphothioketal is present on C117. Residues R122–L126, D307, and V329 each bind UDP-N-acetyl-alpha-D-glucosamine.

The protein belongs to the EPSP synthase family. MurA subfamily.

It localises to the cytoplasm. It carries out the reaction phosphoenolpyruvate + UDP-N-acetyl-alpha-D-glucosamine = UDP-N-acetyl-3-O-(1-carboxyvinyl)-alpha-D-glucosamine + phosphate. It participates in cell wall biogenesis; peptidoglycan biosynthesis. In terms of biological role, cell wall formation. Adds enolpyruvyl to UDP-N-acetylglucosamine. The protein is UDP-N-acetylglucosamine 1-carboxyvinyltransferase of Chlorobium chlorochromatii (strain CaD3).